The following is a 360-amino-acid chain: Phenylalanine--tRNA ligase alpha subunit (360 aa).

Position 255 (Glu255) interacts with Mg(2+).

Belongs to the class-II aminoacyl-tRNA synthetase family. Phe-tRNA synthetase alpha subunit type 1 subfamily. Tetramer of two alpha and two beta subunits. Mg(2+) is required as a cofactor.

The protein localises to the cytoplasm. It catalyses the reaction tRNA(Phe) + L-phenylalanine + ATP = L-phenylalanyl-tRNA(Phe) + AMP + diphosphate + H(+). The protein is Phenylalanine--tRNA ligase alpha subunit of Rhizorhabdus wittichii (strain DSM 6014 / CCUG 31198 / JCM 15750 / NBRC 105917 / EY 4224 / RW1) (Sphingomonas wittichii).